The following is a 434-amino-acid chain: Trigger factor (434 aa).

In terms of domain architecture, PPIase FKBP-type spans 160 to 245 (GDKVKMNFVG…LTEVQAANLP (86 aa)).

Belongs to the FKBP-type PPIase family. Tig subfamily.

The protein localises to the cytoplasm. It carries out the reaction [protein]-peptidylproline (omega=180) = [protein]-peptidylproline (omega=0). Its function is as follows. Involved in protein export. Acts as a chaperone by maintaining the newly synthesized protein in an open conformation. Functions as a peptidyl-prolyl cis-trans isomerase. In Shewanella putrefaciens (strain CN-32 / ATCC BAA-453), this protein is Trigger factor.